We begin with the raw amino-acid sequence, 441 residues long: Probable xylan O-acetyltransferase 10 (441 aa).

Over 1-19 (MMKPQHGGMAGHGGGRTRS) the chain is Cytoplasmic. Residues 20–40 (PFLTSYALTLAFITFVSVLYF) traverse the membrane as a helical; Signal-anchor for type II membrane protein segment. At 41–441 (KDFSSTLHQP…ELLYSKLFFP (401 aa)) the chain is on the lumenal side. A disordered region spans residues 50–81 (PFLTRPPPHRRQIARPRAPSHHHGGGSSSGGG). Basic residues predominate over residues 56 to 73 (PPHRRQIARPRAPSHHHG). Intrachain disulfides connect C97–C148, C119–C184, C128–C422, and C341–C418. N-linked (GlcNAc...) asparagine glycosylation occurs at N154. Positions 171 to 173 (GDS) match the GDS motif motif. The active-site Nucleophile is the S173. N-linked (GlcNAc...) asparagine glycans are attached at residues N212, N343, and N381. D417 serves as the catalytic Proton donor. The DXXH motif signature appears at 417–420 (DCTH). H420 acts as the Proton acceptor in catalysis.

It belongs to the PC-esterase family. TBL subfamily. In terms of tissue distribution, expressed in roots, leaves and stems.

It is found in the golgi apparatus membrane. Its function is as follows. Probable xylan acetyltransferase required for 2-O- and 3-O-monoacetylation of xylosyl residues in xylan. Possesses extremely low activity in vitro. In Oryza sativa subsp. japonica (Rice), this protein is Probable xylan O-acetyltransferase 10.